The chain runs to 379 residues: Homoserine O-succinyltransferase (379 aa).

Residues 51 to 360 (NAVLICHALS…DAPQGHDAFL (310 aa)) enclose the AB hydrolase-1 domain. Catalysis depends on Ser157, which acts as the Nucleophile. Arg227 provides a ligand contact to substrate. Residues Asp323 and His356 contribute to the active site. Substrate is bound at residue Asp357.

The protein belongs to the AB hydrolase superfamily. MetX family. In terms of assembly, homodimer.

The protein localises to the cytoplasm. It carries out the reaction L-homoserine + succinyl-CoA = O-succinyl-L-homoserine + CoA. It participates in amino-acid biosynthesis; L-methionine biosynthesis via de novo pathway; O-succinyl-L-homoserine from L-homoserine: step 1/1. Transfers a succinyl group from succinyl-CoA to L-homoserine, forming succinyl-L-homoserine. The sequence is that of Homoserine O-succinyltransferase from Pseudomonas syringae pv. tomato (strain ATCC BAA-871 / DC3000).